Consider the following 464-residue polypeptide: Glycine--tRNA ligase (464 aa).

Residues Arg-104 and Glu-175 each coordinate substrate. ATP contacts are provided by residues Arg-207 to Glu-209, Phe-217 to Phe-222, Glu-292 to Leu-293, and Gly-336 to Arg-339. A substrate-binding site is contributed by Phe-222–Glu-226. Residue Glu-332–Gly-336 coordinates substrate.

Belongs to the class-II aminoacyl-tRNA synthetase family. Homodimer.

It is found in the cytoplasm. The enzyme catalyses tRNA(Gly) + glycine + ATP = glycyl-tRNA(Gly) + AMP + diphosphate. Its function is as follows. Catalyzes the attachment of glycine to tRNA(Gly). The protein is Glycine--tRNA ligase of Leptospira borgpetersenii serovar Hardjo-bovis (strain JB197).